A 688-amino-acid polypeptide reads, in one-letter code: Polyphosphate kinase (688 aa).

Residue Asn45 participates in ATP binding. Arg375 and Arg405 together coordinate Mg(2+). Residues 430–464 (PGLKIHAKLFLISRKEGDDVVRYAHIGTGNFNEKT) enclose the PLD phosphodiesterase domain. Residue His435 is the Phosphohistidine intermediate of the active site. Residues Tyr468, Arg564, and His592 each contribute to the ATP site.

This sequence belongs to the polyphosphate kinase 1 (PPK1) family. Requires Mg(2+) as cofactor. An intermediate of this reaction is the autophosphorylated ppk in which a phosphate is covalently linked to a histidine residue through a N-P bond.

The catalysed reaction is [phosphate](n) + ATP = [phosphate](n+1) + ADP. Its function is as follows. Catalyzes the reversible transfer of the terminal phosphate of ATP to form a long-chain polyphosphate (polyP). The protein is Polyphosphate kinase of Salmonella typhimurium (strain LT2 / SGSC1412 / ATCC 700720).